The sequence spans 106 residues: Large ribosomal subunit protein uL24 (106 aa).

This sequence belongs to the universal ribosomal protein uL24 family. In terms of assembly, part of the 50S ribosomal subunit.

Its function is as follows. One of two assembly initiator proteins, it binds directly to the 5'-end of the 23S rRNA, where it nucleates assembly of the 50S subunit. One of the proteins that surrounds the polypeptide exit tunnel on the outside of the subunit. The chain is Large ribosomal subunit protein uL24 from Thermosipho africanus (strain TCF52B).